The sequence spans 446 residues: Argininosuccinate synthase (446 aa).

ATP is bound by residues 17-25 (AFSGGLDTS) and Ala43. Tyr99 serves as a coordination point for L-citrulline. ATP contacts are provided by Gly129 and Thr131. L-aspartate contacts are provided by Thr131, Asn135, and Asp136. Asn135 contacts L-citrulline. Asp136 lines the ATP pocket. Residues Arg139 and Ser192 each coordinate L-citrulline. Residue Asp194 participates in ATP binding. Residues Thr201, Glu203, and Glu280 each contribute to the L-citrulline site.

It belongs to the argininosuccinate synthase family. Type 2 subfamily. As to quaternary structure, homotetramer.

It localises to the cytoplasm. The catalysed reaction is L-citrulline + L-aspartate + ATP = 2-(N(omega)-L-arginino)succinate + AMP + diphosphate + H(+). The protein operates within amino-acid biosynthesis; L-arginine biosynthesis; L-arginine from L-ornithine and carbamoyl phosphate: step 2/3. The sequence is that of Argininosuccinate synthase from Methylibium petroleiphilum (strain ATCC BAA-1232 / LMG 22953 / PM1).